A 722-amino-acid chain; its full sequence is MGRRSALALAVVSALLCQVWSSGVFELKLQEFVNKKGLLGNRNCCRGGSGPPCACRTFFRVCLKHYQASVSPEPPCTYGSAVTPVLGVDSFSLPDGAGIDPAFSNPIRFPFGFTWPGTFSLIIEALHTDSPDDLATENPERLISRLTTQRHLTVGEEWSQDLHSSGRTDLRYSYRFVCDEHYYGEGCSVFCRPRDDAFGHFTCGDRGEKMCDPGWKGQYCTDPICLPGCDDQHGYCDKPGECKCRVGWQGRYCDECIRYPGCLHGTCQQPWQCNCQEGWGGLFCNQDLNYCTHHKPCRNGATCTNTGQGSYTCSCRPGYTGANCELEVDECAPSPCKNGASCTDLEDSFSCTCPPGFYGKVCELSAMTCADGPCFNGGRCSDNPDGGYTCHCPLGFSGFNCEKKMDLCGSSPCSNGAKCVDLGNSYLCRCQAGFSGRYCEDNVDDCASSPCANGGTCRDSVNDFSCTCPPGYTGKNCSAPVSRCEHAPCHNGATCHQRGQRYMCECAQGYGGPNCQFLLPEPPPGPMVVDLSERHMESQGGPFPWVAVCAGVVLVLLLLLGCAAVVVCVRLKLQKHQPPPEPCGGETETMNNLANCQREKDVSVSIIGATQIKNTNKKADFHGDHGAEKSSFKVRYPTVDYNLVRDLKGDEATVRDTHSKRDTKCQSQSSAGEEKIAPTLRGGEIPDRKRPESVYSTSKDTKYQSVYVLSAEKDECVIATEV.

The N-terminal stretch at 1 to 17 (MGRRSALALAVVSALLC) is a signal peptide. Residues 18 to 545 (QVWSSGVFEL…MESQGGPFPW (528 aa)) lie on the Extracellular side of the membrane. The DSL domain occupies 176–220 (FVCDEHYYGEGCSVFCRPRDDAFGHFTCGDRGEKMCDPGWKGQYC). 27 cysteine pairs are disulfide-bonded: Cys178-Cys187, Cys191-Cys203, Cys211-Cys220, Cys225-Cys236, Cys229-Cys242, Cys244-Cys253, Cys256-Cys267, Cys262-Cys273, Cys275-Cys284, Cys291-Cys303, Cys297-Cys313, Cys315-Cys324, Cys331-Cys342, Cys336-Cys351, Cys353-Cys362, Cys369-Cys380, Cys374-Cys390, Cys392-Cys401, Cys408-Cys419, Cys413-Cys428, Cys430-Cys439, Cys446-Cys457, Cys451-Cys466, Cys468-Cys477, Cys484-Cys495, Cys489-Cys504, and Cys506-Cys515. EGF-like domains lie at 225–253 (CLPGCDDQHGYCDKPGECKCRVGWQGRYC), 256–284 (CIRYPGCLHGTCQQPWQCNCQEGWGGLFC), and 291–324 (CTHHKPCRNGATCTNTGQGSYTCSCRPGYTGANC). An EGF-like 4; calcium-binding domain is found at 331 to 362 (CAPSPCKNGASCTDLEDSFSCTCPPGFYGKVC). EGF-like domains are found at residues 369-401 (CADGPCFNGGRCSDNPDGGYTCHCPLGFSGFNC) and 408-439 (CGSSPCSNGAKCVDLGNSYLCRCQAGFSGRYC). In terms of domain architecture, EGF-like 7; calcium-binding spans 446–477 (CASSPCANGGTCRDSVNDFSCTCPPGYTGKNC). Asn476 carries an N-linked (GlcNAc...) asparagine glycan. The region spanning 484–515 (CEHAPCHNGATCHQRGQRYMCECAQGYGGPNC) is the EGF-like 8 domain. Residues 546 to 568 (VAVCAGVVLVLLLLLGCAAVVVC) traverse the membrane as a helical segment. Over 569-722 (VRLKLQKHQP…KDECVIATEV (154 aa)) the chain is Cytoplasmic. Lys613 is covalently cross-linked (Glycyl lysine isopeptide (Lys-Gly) (interchain with G-Cter in ubiquitin)). The residue at position 638 (Thr638) is a Phosphothreonine. Over residues 655–664 (RDTHSKRDTK) the composition is skewed to basic and acidic residues. A disordered region spans residues 655-697 (RDTHSKRDTKCQSQSSAGEEKIAPTLRGGEIPDRKRPESVYST). A Phosphoserine; by PKB modification is found at Ser693. Ser696 carries the phosphoserine modification. The interaction with MAGI1 stretch occupies residues 719–722 (ATEV).

In terms of assembly, homodimer. Interacts with TJP1. Interacts with MMP14; inhibits DLL1-induced Notch signaling. Interacts with MAGI1 (via PDZ domain); forms a complex with CTNNB1 and CDH2 and promotes recruitment to the adherens junction and stabilization on the cell surface. Interacts with PSEN1; undergoes a presenilin-dependent gamma-secretase cleavage that releases a Dll1-intracellular form. Interacts with MFAP5. Interacts with MIB1. Interacts with NEURL1B; leads to ubiquitination. Interacts with NEURL1. Interacts with SYNJ2BP; enhances DLL1 protein stability, and promotes Notch signaling in endothelial cells. Interacts with MAGI1, MAGI2, MAGI3 and MPDZ. Interacts (via ubiquitin) with EPN1 (via IUM domain); binding with NOTCH1 attached to neighboring cell, promotes ligand ubiquitination and EPN1 interaction, leading to NECD transendocytosis and Notch signaling. Interacts with NOTCH1. In terms of processing, ubiquitinated by MIB (MIB1 or MIB2), leading to its endocytosis and subsequent degradation. Ubiquitinated; promotes recycling back to the plasma membrane and confers a strong affinity for NOTCH1. Multi-ubiquitination of Lys-613 by MIB1 promotes both cis and trans-interaction with NOTCH1, as well as activation of Notch signaling. Ubiquitinated by NEURL1B. Post-translationally, phosphorylated in a membrane association-dependent manner. Phosphorylation at Ser-696 requires the presence of Ser-693, whereas phosphorylation at Thr-638 and Ser-693 occurs independently of the other sites. Phosphorylation is required for full ligand activity in vitro and affects surface presentation, ectodomain shedding, and endocytosis. Cleaved by MMP14; negatively regulates DLL1-induced Notch signaling in HPCs, modulating B-lymphocyte differentiation in bone marrow. Undergoes two consecutive processing events: a shedding event, partially by ADAM10, that generates a soluble extracellular form and an intracellular membrane-anchored form, followed by a gamma-secretase cleavage releasing an intracellular fragment. In terms of processing, O-fucosylated. Can be elongated to a disaccharide by MFNG. In terms of tissue distribution, in the embryo, expressed in the paraxial mesoderm and nervous system. Expressed at high levels in adult heart and at lower levels, in adult lung. Highly expressed in satellite cells from masseter and tongue than in satellite cells from leg and extraocular muscle.?.

It is found in the apical cell membrane. Its subcellular location is the cell junction. The protein localises to the adherens junction. It localises to the membrane raft. The protein resides in the cell membrane. It is found in the nucleus. Transmembrane ligand protein of NOTCH1, NOTCH2 and NOTCH3 receptors that binds the extracellular domain (ECD) of Notch receptor in a cis and trans fashion manner. Following transinteraction, ligand cells produce mechanical force that depends of a clathrin-mediated endocytosis, requiring ligand ubiquitination, EPN1 interaction, and actin polymerisation; these events promote Notch receptor extracellular domain (NECD) transendocytosis and triggers Notch signaling through induction of cleavage, hyperphosphorylation, and nuclear accumulation of the intracellular domain of Notch receptors (NICD). Is required for embryonic development and maintenance of adult stem cells in many different tissues and immune systeme; the DLL1-induced Notch signaling is mediated through an intercellular communication that regulates cell lineage, cell specification, cell patterning and morphogenesis through effects on differentiation and proliferation. Plays a role in brain development at different level, namely by regulating neuronal differentiation of neural precursor cells via cell-cell interaction, most likely through the lateral inhibitory system in an endogenous level dependent-manner. During neocortex development, Dll1-Notch signaling transmission is mediated by dynamic interactions between intermediate neurogenic progenitors and radial glia; the cell-cell interactions are mediated via dynamic and transient elongation processes, likely to reactivate/maintain Notch activity in neighboring progenitors, and coordinate progenitor cell division and differentiation across radial and zonal boundaries. During cerebellar development, regulates Bergmann glial monolayer formation and its morphological maturation through a Notch signaling pathway. At the retina and spinal cord level, regulates neurogenesis by preventing the premature differentiation of neural progenitors and also by maintaining progenitors in spinal cord through Notch signaling pathway. Also controls neurogenesis of the neural tube in a progenitor domain-specific fashion along the dorsoventral axis. Maintains quiescence of neural stem cells and plays a role as a fate determinant that segregates asymmetrically to one daughter cell during neural stem cells mitosis, resulting in neuronal differentiation in Dll1-inheriting cell. Plays a role in immune systeme development, namely the development of all T-cells and marginal zone (MZ) B cells. Blocks the differentiation of progenitor cells into the B-cell lineage while promoting the emergence of a population of cells with the characteristics of a T-cell/NK-cell precursor. Upon MMP14 cleavage, negatively regulates Notch signaling in haematopoietic progenitor cells to specifically maintain normal B-cell development in bone marrow. Also plays a role during muscle development. During early development, inhibits myoblasts differentiation from the medial dermomyotomal lip and later regulates progenitor cell differentiation. Directly modulates cell adhesion and basal lamina formation in satellite cells through Notch signaling. Maintains myogenic progenitors pool by suppressing differentiation through down-regulation of MYOD1 and is required for satellite cell homing and PAX7 expression. During craniofacial and trunk myogenesis suppresses differentiation of cranial mesoderm-derived and somite-derived muscle via MYOD1 regulation but in cranial mesoderm-derived progenitors, is neither required for satellite cell homing nor for PAX7 expression. Also plays a role during pancreatic cell development. During type B pancreatic cell development, may be involved in the initiation of proximodistal patterning in the early pancreatic epithelium. Stimulates multipotent pancreatic progenitor cells proliferation and pancreatic growth by maintaining HES1 expression and PTF1A protein levels. During fetal stages of development, is required to maintain arterial identity and the responsiveness of arterial endothelial cells for VEGFA through regulation of KDR activation and NRP1 expression. Controls sprouting angiogenesis and subsequent vertical branch formation through regulation on tip cell differentiation. Negatively regulates goblet cell differentiation in intestine and controls secretory fat commitment through lateral inhibition in small intestine. Plays a role during inner ear development; negatively regulates auditory hair cell differentiation. Plays a role during nephron development through Notch signaling pathway. Regulates growth, blood pressure and energy homeostasis. This Mus musculus (Mouse) protein is Delta-like protein 1 (Dll1).